The primary structure comprises 1383 residues: DNA-directed RNA polymerase subunit beta'' (1383 aa).

Zn(2+) contacts are provided by Cys220, Cys289, Cys296, and Cys299.

It belongs to the RNA polymerase beta' chain family. RpoC2 subfamily. As to quaternary structure, in plastids the minimal PEP RNA polymerase catalytic core is composed of four subunits: alpha, beta, beta', and beta''. When a (nuclear-encoded) sigma factor is associated with the core the holoenzyme is formed, which can initiate transcription. Zn(2+) is required as a cofactor.

Its subcellular location is the plastid. The protein resides in the chloroplast. It carries out the reaction RNA(n) + a ribonucleoside 5'-triphosphate = RNA(n+1) + diphosphate. DNA-dependent RNA polymerase catalyzes the transcription of DNA into RNA using the four ribonucleoside triphosphates as substrates. This chain is DNA-directed RNA polymerase subunit beta'', found in Oenothera parviflora (Small-flowered evening primrose).